The primary structure comprises 336 residues: MSRVGIIGAGSWGTALSLVLANNGHSVEIWSIVESEIEMLKEKHEHIDKLPGVKLPDSITFTTDIEETIKNNDILVLAVPSVFTRSTAVKMAPFVKEGQIIVCVAKGIEENTLMTISDVVESEIPCADVAVMCGPSHAEEVGRLLPTTVVAGARTQKTAEIVQDLFMNEVFRVYTSPDVLGMELGGSLKNVIALAAGMADGLGYGDNTKAALITRGIAEISVLAIEMGAKAETLFGLTGIGDLIVTCESRHSRNRKAGMLIGQGYTMDEATKEVKMVVEGIYSAKAALALAEKYDVRMPIIEEVNRVLFEDKPAKEAVSELMLRDRKIEHSSLEWK.

3 residues coordinate NADPH: serine 11, tryptophan 12, and lysine 106. Positions 106, 134, and 136 each coordinate sn-glycerol 3-phosphate. Residue alanine 138 participates in NADPH binding. Residues lysine 189, aspartate 242, serine 252, arginine 253, and asparagine 254 each coordinate sn-glycerol 3-phosphate. The Proton acceptor role is filled by lysine 189. Arginine 253 serves as a coordination point for NADPH. 2 residues coordinate NADPH: valine 277 and glutamate 279.

The protein belongs to the NAD-dependent glycerol-3-phosphate dehydrogenase family.

The protein localises to the cytoplasm. The catalysed reaction is sn-glycerol 3-phosphate + NAD(+) = dihydroxyacetone phosphate + NADH + H(+). The enzyme catalyses sn-glycerol 3-phosphate + NADP(+) = dihydroxyacetone phosphate + NADPH + H(+). Its pathway is membrane lipid metabolism; glycerophospholipid metabolism. Functionally, catalyzes the reduction of the glycolytic intermediate dihydroxyacetone phosphate (DHAP) to sn-glycerol 3-phosphate (G3P), the key precursor for phospholipid synthesis. This Agathobacter rectalis (strain ATCC 33656 / DSM 3377 / JCM 17463 / KCTC 5835 / VPI 0990) (Eubacterium rectale) protein is Glycerol-3-phosphate dehydrogenase [NAD(P)+].